A 522-amino-acid polypeptide reads, in one-letter code: Glucans biosynthesis protein G (522 aa).

An N-terminal signal peptide occupies residues methionine 1 to alanine 33.

The protein belongs to the OpgD/OpgG family.

It localises to the periplasm. It participates in glycan metabolism; osmoregulated periplasmic glucan (OPG) biosynthesis. Its function is as follows. Involved in the biosynthesis of osmoregulated periplasmic glucans (OPGs). In Serratia proteamaculans (strain 568), this protein is Glucans biosynthesis protein G.